The sequence spans 442 residues: Exodeoxyribonuclease 7 large subunit (442 aa).

It belongs to the XseA family. Heterooligomer composed of large and small subunits.

The protein localises to the cytoplasm. It carries out the reaction Exonucleolytic cleavage in either 5'- to 3'- or 3'- to 5'-direction to yield nucleoside 5'-phosphates.. Bidirectionally degrades single-stranded DNA into large acid-insoluble oligonucleotides, which are then degraded further into small acid-soluble oligonucleotides. In Shewanella loihica (strain ATCC BAA-1088 / PV-4), this protein is Exodeoxyribonuclease 7 large subunit.